A 158-amino-acid chain; its full sequence is MAEVESFQLDHTKVLAPYVRLIGSETGPKGDVITNFDVRFVQPNANAIGMAALHTIEHSMASLIRDRIDGMIDFSPFGCQTGFHMIMWGEHSSEEIAKVIKSSLEELSSDEFGWDNVPGVAEKECGNYRNHSLFGAKEWSKKILAEGISTDPYERKVI.

Positions 54, 58, and 125 each coordinate Fe cation.

It belongs to the LuxS family. In terms of assembly, homodimer. It depends on Fe cation as a cofactor.

The catalysed reaction is S-(5-deoxy-D-ribos-5-yl)-L-homocysteine = (S)-4,5-dihydroxypentane-2,3-dione + L-homocysteine. In terms of biological role, involved in the synthesis of autoinducer 2 (AI-2) which is secreted by bacteria and is used to communicate both the cell density and the metabolic potential of the environment. The regulation of gene expression in response to changes in cell density is called quorum sensing. Catalyzes the transformation of S-ribosylhomocysteine (RHC) to homocysteine (HC) and 4,5-dihydroxy-2,3-pentadione (DPD). This Lactococcus lactis subsp. cremoris (strain MG1363) protein is S-ribosylhomocysteine lyase.